A 337-amino-acid chain; its full sequence is 2-oxoglutarate receptor 1 (337 aa).

The Extracellular segment spans residues 1–37; that stretch reads MIETLDSPANDSDFLDYITALENCTDEQISFKMQYLP. Asparagine 23 carries an N-linked (GlcNAc...) asparagine glycan. The chain crosses the membrane as a helical span at residues 38-58; sequence VIYSIIFLVGFPGNTVAISIY. The Cytoplasmic segment spans residues 59–69; sequence VFKMRPWKSST. Residues 70-90 traverse the membrane as a helical segment; it reads IIMLNLALTDLLYLTSLPFLI. Topologically, residues 91 to 116 are extracellular; it reads HYYASGENWIFGDFMCKFIRFGFHFN. An intrachain disulfide couples cysteine 106 to cysteine 183. A helical transmembrane segment spans residues 117–137; sequence LYSSILFLTCFSLFRYIVIIH. The Cytoplasmic portion of the chain corresponds to 138–151; sequence PMSCFSIQKTRWAV. The chain crosses the membrane as a helical span at residues 152-172; it reads VACAGVWVISLVAVMPMTFLI. Residues 173–200 lie on the Extracellular side of the membrane; that stretch reads TSTTRTNRSACLDLTSSDDLTTIKWYNL. A helical membrane pass occupies residues 201–221; it reads ILTATTFCLPLLIVTLCYTTI. Residues 222–242 are Cytoplasmic-facing; it reads ISTLTHGPRTHSCFKQKARRL. The chain crosses the membrane as a helical span at residues 243-263; sequence TILLLLVFYVCFLPFHILRVI. The Extracellular segment spans residues 264–284; the sequence is RIESRLLSISCSIESHIHEAY. The chain crosses the membrane as a helical span at residues 285 to 305; sequence IVSRPLAALNTFGNLLLYVVV. Topologically, residues 306 to 337 are cytoplasmic; it reads SNNFQQAFCSAVRCKAIGDLEQAKKDSCSNNP.

Belongs to the G-protein coupled receptor 1 family. Highly expressed in mast cells and is found predominantly in the tissues of the respiratory tract and kidneys.

It localises to the cell membrane. In terms of biological role, g protein-coupled receptor for dicarboxylates and amino dicarboxylates. Receptor for itaconate, a metabolite produced by myeloid lineages. In the respiratory epithelium, couples the binding of itaconate to the activation of GNA11 and downstream intracellular Ca(2+) release, leading to mucocilliary clearance of airborne pathogens. Receptor for leukotriene E4 (LTE4) produced by mast cells upon allergic inflammation. Binds with high affinity to LTE4 and elicits mucin release from pulmonary epithelium in response to airborne fungi allergens. Regulates mucin-producing goblet cell homeostasis. Receptor for alpha-ketoglutarate produced by proximal tubule renal cells upon metabolic alkalosis. In an intrarenal paracrine signaling pathway, binds alpha-ketoglutarate and drives transepithelial salt reabsorption and bicarbonate secretion by SLC26A4/pendrin-positive intercalated cells. The protein is 2-oxoglutarate receptor 1 (Oxgr1) of Rattus norvegicus (Rat).